The chain runs to 558 residues: Dihydroxy-acid dehydratase (558 aa).

Asp81 lines the Mg(2+) pocket. Cys122 contributes to the [2Fe-2S] cluster binding site. Mg(2+) contacts are provided by Asp123 and Lys124. Position 124 is an N6-carboxylysine (Lys124). Residue Cys195 coordinates [2Fe-2S] cluster. Glu447 lines the Mg(2+) pocket. Ser473 serves as the catalytic Proton acceptor.

It belongs to the IlvD/Edd family. Homodimer. [2Fe-2S] cluster serves as cofactor. The cofactor is Mg(2+).

It catalyses the reaction (2R)-2,3-dihydroxy-3-methylbutanoate = 3-methyl-2-oxobutanoate + H2O. It carries out the reaction (2R,3R)-2,3-dihydroxy-3-methylpentanoate = (S)-3-methyl-2-oxopentanoate + H2O. It participates in amino-acid biosynthesis; L-isoleucine biosynthesis; L-isoleucine from 2-oxobutanoate: step 3/4. Its pathway is amino-acid biosynthesis; L-valine biosynthesis; L-valine from pyruvate: step 3/4. Its function is as follows. Functions in the biosynthesis of branched-chain amino acids. Catalyzes the dehydration of (2R,3R)-2,3-dihydroxy-3-methylpentanoate (2,3-dihydroxy-3-methylvalerate) into 2-oxo-3-methylpentanoate (2-oxo-3-methylvalerate) and of (2R)-2,3-dihydroxy-3-methylbutanoate (2,3-dihydroxyisovalerate) into 2-oxo-3-methylbutanoate (2-oxoisovalerate), the penultimate precursor to L-isoleucine and L-valine, respectively. In Bacillus pumilus (strain SAFR-032), this protein is Dihydroxy-acid dehydratase.